The primary structure comprises 291 residues: Elongation factor Ts (291 aa).

The involved in Mg(2+) ion dislocation from EF-Tu stretch occupies residues 79–82 (TDFV).

The protein belongs to the EF-Ts family.

The protein resides in the cytoplasm. In terms of biological role, associates with the EF-Tu.GDP complex and induces the exchange of GDP to GTP. It remains bound to the aminoacyl-tRNA.EF-Tu.GTP complex up to the GTP hydrolysis stage on the ribosome. The chain is Elongation factor Ts from Anaplasma marginale (strain St. Maries).